Here is a 123-residue protein sequence, read N- to C-terminus: Sperm-associated antigen 11A (123 aa).

A signal peptide spans 1–25 (MRQRLLPSVTSLLLVALLFPGSSQA). Residue Asn29 is glycosylated (N-linked (GlcNAc...) asparagine).

Belongs to the SPAG11 family.

The protein localises to the secreted. Has antimicrobial activity against E.coli. Plays a role in the defense response in the male reproductive tract, contributing to sperm maturation, storage and protection. The sequence is that of Sperm-associated antigen 11A from Homo sapiens (Human).